Here is a 417-residue protein sequence, read N- to C-terminus: Ribulose bisphosphate carboxylase large chain (417 aa).

The substrate site is built by Asn103 and Thr153. Lys155 acts as the Proton acceptor in catalysis. Position 157 (Lys157) interacts with substrate. 3 residues coordinate Mg(2+): Lys181, Asp183, and Glu184. Position 181 is an N6-carboxylysine (Lys181). His274 functions as the Proton acceptor in the catalytic mechanism. 3 residues coordinate substrate: Arg275, His307, and Ser359.

The protein belongs to the RuBisCO large chain family. Type I subfamily. Heterohexadecamer of 8 large chains and 8 small chains. Requires Mg(2+) as cofactor.

Its subcellular location is the plastid. The protein localises to the chloroplast. The enzyme catalyses 2 (2R)-3-phosphoglycerate + 2 H(+) = D-ribulose 1,5-bisphosphate + CO2 + H2O. It catalyses the reaction D-ribulose 1,5-bisphosphate + O2 = 2-phosphoglycolate + (2R)-3-phosphoglycerate + 2 H(+). In terms of biological role, ruBisCO catalyzes two reactions: the carboxylation of D-ribulose 1,5-bisphosphate, the primary event in carbon dioxide fixation, as well as the oxidative fragmentation of the pentose substrate in the photorespiration process. Both reactions occur simultaneously and in competition at the same active site. The polypeptide is Ribulose bisphosphate carboxylase large chain (Acrostichum aureum (Golden leather fern)).